Reading from the N-terminus, the 215-residue chain is Putative ribosome biogenesis protein slx9-like (215 aa).

3 disordered regions span residues Ile-49 to Met-121, Asp-133 to Lys-157, and Leu-189 to Lys-215.

Belongs to the SLX9 family.

The protein resides in the nucleus. Its subcellular location is the nucleolus. Involved in ribosome biogenesis. In Dictyostelium discoideum (Social amoeba), this protein is Putative ribosome biogenesis protein slx9-like.